We begin with the raw amino-acid sequence, 113 residues long: Coat protein TP1 (113 aa).

The protein resides in the virion. The chain is Coat protein TP1 from Thermoproteus tenax virus 1 (strain KRA1) (TTV1).